We begin with the raw amino-acid sequence, 310 residues long: 4-hydroxy-3-methylbut-2-enyl diphosphate reductase (310 aa).

Cys-12 contributes to the [4Fe-4S] cluster binding site. (2E)-4-hydroxy-3-methylbut-2-enyl diphosphate contacts are provided by His-41 and His-74. Positions 41 and 74 each coordinate dimethylallyl diphosphate. Residues His-41 and His-74 each coordinate isopentenyl diphosphate. Cys-96 lines the [4Fe-4S] cluster pocket. A (2E)-4-hydroxy-3-methylbut-2-enyl diphosphate-binding site is contributed by His-124. His-124 provides a ligand contact to dimethylallyl diphosphate. His-124 contributes to the isopentenyl diphosphate binding site. The Proton donor role is filled by Glu-126. Thr-167 lines the (2E)-4-hydroxy-3-methylbut-2-enyl diphosphate pocket. Residue Cys-197 participates in [4Fe-4S] cluster binding. (2E)-4-hydroxy-3-methylbut-2-enyl diphosphate-binding residues include Ser-225, Ser-226, Asn-227, and Ser-269. Residues Ser-225, Ser-226, Asn-227, and Ser-269 each contribute to the dimethylallyl diphosphate site. Ser-225, Ser-226, Asn-227, and Ser-269 together coordinate isopentenyl diphosphate.

This sequence belongs to the IspH family. The cofactor is [4Fe-4S] cluster.

The catalysed reaction is isopentenyl diphosphate + 2 oxidized [2Fe-2S]-[ferredoxin] + H2O = (2E)-4-hydroxy-3-methylbut-2-enyl diphosphate + 2 reduced [2Fe-2S]-[ferredoxin] + 2 H(+). It carries out the reaction dimethylallyl diphosphate + 2 oxidized [2Fe-2S]-[ferredoxin] + H2O = (2E)-4-hydroxy-3-methylbut-2-enyl diphosphate + 2 reduced [2Fe-2S]-[ferredoxin] + 2 H(+). Its pathway is isoprenoid biosynthesis; dimethylallyl diphosphate biosynthesis; dimethylallyl diphosphate from (2E)-4-hydroxy-3-methylbutenyl diphosphate: step 1/1. It functions in the pathway isoprenoid biosynthesis; isopentenyl diphosphate biosynthesis via DXP pathway; isopentenyl diphosphate from 1-deoxy-D-xylulose 5-phosphate: step 6/6. Catalyzes the conversion of 1-hydroxy-2-methyl-2-(E)-butenyl 4-diphosphate (HMBPP) into a mixture of isopentenyl diphosphate (IPP) and dimethylallyl diphosphate (DMAPP). Acts in the terminal step of the DOXP/MEP pathway for isoprenoid precursor biosynthesis. In Tolumonas auensis (strain DSM 9187 / NBRC 110442 / TA 4), this protein is 4-hydroxy-3-methylbut-2-enyl diphosphate reductase.